Reading from the N-terminus, the 385-residue chain is tRNA pseudouridine synthase D (385 aa).

The Nucleophile role is filled by Asp86. A TRUD domain is found at 165–305; the sequence is GFPNYFGNQR…TRFLQKDIAP (141 aa).

The protein belongs to the pseudouridine synthase TruD family.

The enzyme catalyses uridine(13) in tRNA = pseudouridine(13) in tRNA. Responsible for synthesis of pseudouridine from uracil-13 in transfer RNAs. The chain is tRNA pseudouridine synthase D from Helicobacter hepaticus (strain ATCC 51449 / 3B1).